We begin with the raw amino-acid sequence, 23 residues long: U22-ctenitoxin-Co1a (23 aa).

Expressed by the venom gland.

The protein resides in the secreted. The sequence is that of U22-ctenitoxin-Co1a from Ctenus ornatus (Brazilian spider).